We begin with the raw amino-acid sequence, 331 residues long: MSDNKKQQALELALKQIEKQFGKGSIMKLGDGADHSIEAIPSGSIALDIALGIGGYPRGRIIEVYGPESSGKTTLTLHAMASAQKQGGTVAFIDAEHALDPNYAKALGVDIDNLVLSQPDTGEQALDIAEALIKSGSIDMIVIDSVAALVPEAEIAGDMSANHVGLQARMMSQAMRKMSGVISKSNVVAIFINQIREKVGVMFGNPETTPGGRALKFFSSVRLEIRRAEAIKQGSEMIGIKSNVKVVKSKVAPPLKTASIDIMYGTGISRSGEVLDLSVELNLVNKSGAWYNIGEEKLGQGRDNAKQYLEDKPELLNELEKKVRTHFKLTK.

66-73 (GPESSGKT) serves as a coordination point for ATP.

Belongs to the RecA family.

Its subcellular location is the cytoplasm. Its function is as follows. Can catalyze the hydrolysis of ATP in the presence of single-stranded DNA, the ATP-dependent uptake of single-stranded DNA by duplex DNA, and the ATP-dependent hybridization of homologous single-stranded DNAs. It interacts with LexA causing its activation and leading to its autocatalytic cleavage. This is Protein RecA from Acholeplasma laidlawii (strain PG-8A).